Here is a 220-residue protein sequence, read N- to C-terminus: MKFEKYIDHTLLKPESTRTQIDQIIDEAKAYNFKSVCVNPTHVKYAAERLADSEVLVCTVIGFPLGASTTATKVFETEDAIQNGADEIDMVINIGALKDGRFDDVQQDIEAVVKAAEGHTVKVIIETVLLDHDEIVKASELTKAAGADFVKTSTGFAGGGATAEDVKLMKDTVGADVEVKASGGVRNLEDFNKMVEAGATRIGASAGVQIMQGLEADSDY.

The Proton donor/acceptor role is filled by D89. The active-site Schiff-base intermediate with acetaldehyde is K151. The active-site Proton donor/acceptor is K180.

It belongs to the DeoC/FbaB aldolase family. DeoC type 1 subfamily.

The protein localises to the cytoplasm. It carries out the reaction 2-deoxy-D-ribose 5-phosphate = D-glyceraldehyde 3-phosphate + acetaldehyde. It participates in carbohydrate degradation; 2-deoxy-D-ribose 1-phosphate degradation; D-glyceraldehyde 3-phosphate and acetaldehyde from 2-deoxy-alpha-D-ribose 1-phosphate: step 2/2. In terms of biological role, catalyzes a reversible aldol reaction between acetaldehyde and D-glyceraldehyde 3-phosphate to generate 2-deoxy-D-ribose 5-phosphate. This Staphylococcus aureus (strain MRSA252) protein is Deoxyribose-phosphate aldolase 1.